The sequence spans 1215 residues: Zinc finger SWIM domain-containing protein 6 (1215 aa).

2 disordered regions span residues 1-46 (MAER…RPGP) and 133-161 (AAGG…SPAA). Composition is skewed to gly residues over residues 18-38 (PGGG…GGGY) and 133-155 (AAGG…GGGS). The SWIM-type zinc-finger motif lies at 246–283 (CNVAISFDRCKITSVTCSCGNKDIFYCAHVVALSLYRI).

Involved in nervous system development, important for striatal morphology and motor regulation. This is Zinc finger SWIM domain-containing protein 6 from Homo sapiens (Human).